We begin with the raw amino-acid sequence, 126 residues long: Holo-[acyl-carrier-protein] synthase (126 aa).

Mg(2+) is bound by residues D9 and E58.

Belongs to the P-Pant transferase superfamily. AcpS family. Requires Mg(2+) as cofactor.

It localises to the cytoplasm. The enzyme catalyses apo-[ACP] + CoA = holo-[ACP] + adenosine 3',5'-bisphosphate + H(+). Transfers the 4'-phosphopantetheine moiety from coenzyme A to a Ser of acyl-carrier-protein. The chain is Holo-[acyl-carrier-protein] synthase from Vibrio campbellii (strain ATCC BAA-1116).